A 123-amino-acid chain; its full sequence is cAMP-responsive element-binding protein-like 2 (123 aa).

Residues 1–24 are disordered; it reads MDDSKVVGGKVKKPGKRGRKPAKI. A compositionally biased stretch (basic residues) spans 10–21; sequence KVKKPGKRGRKP. Positions 23–86 constitute a bZIP domain; sequence KIDLKAKLER…MAMDQGKIPS (64 aa). A basic motif region spans residues 29-60; the sequence is KLERSRQSARECRARKKLRYQYLEELVSSRER. The segment at 62–69 is leucine-zipper; sequence ICALREEL. The segment at 93-123 is disordered; that stretch reads TGEEQNKSQQNSSRHPKAGKTDANTNSLVGN. Over residues 114–123 the composition is skewed to polar residues; the sequence is DANTNSLVGN.

The protein belongs to the bZIP family. ATF subfamily. As to quaternary structure, interacts with CREB1; regulates CREB1 phosphorylation, stability and transcriptional activity. Post-translationally, phosphorylated by AMPK.

It is found in the nucleus. Probable regulator of CREB1 transcriptional activity which is involved in adipose cells differentiation. May also play a regulatory role in the cell cycle. The polypeptide is cAMP-responsive element-binding protein-like 2 (Crebl2) (Rattus norvegicus (Rat)).